Consider the following 969-residue polypeptide: MMNRFRKWLYKPKRSDPQLLAQFYYADEELNQVATELDSLDGRKDPQRCTLLVNQFRSCQDNVLNIINQIMDECIPEERANRDFCVKFPEEIRHDNLAGQLWFGAECLAAGSIIMNREIESMAMRPLAKDLTRSLEEVRNITRDQALRDLNHYTERIKEALRHFDGLFAEFELSYVSAMVPVKSPKEYYIQQEVIVLFCETVERALKLEYLTQDMIDDYEPALMFTIPRLAIVCGLVIYSEGPLNLDRKPEDMSELFRPFRTLLRKIRDLLQTLTEEELMTLERSLCISQDGEFPTSSTNDPSASTGPDSQTEELEKEKGVEEVVDLTLFVTQEDSVWKEEEEKQVLPESSSESEEEEPIDADLACSMQYDEEEIEQLNMMVHQVGDEMSTLLSPPSQNQSPAHRPRPYNGSSLEGSSATSSTQASPRRAPGSYHDDDRVFFMDDLESGLSSELCRGQLPLPTVCLRSPEGSSCNGWLTVCQSSDATNLGCQRKLSQSTESVGNSDRMVNGWEGLQDEDSVQTAEEIANRTGGMKLSATVIFNPHSPSLSDLAVVLPQSADAPEGGEGGALVATQCLLNSCVCCAGGCVDNHEDAMEPAGRSMALGFEKHKLTITSSVIQSAVAAGSPGKGNGHLPLTLPPSQGHLTHSVPNCSVQNQAREDEGSQDGIHYPCCEKCSPGVLLAQDRGSGHEGGPSCTLQDTGCQTQHNASVKGRSECFGKQSKDDNRKINSSSQESPLSSVPSSDIDGVSVTTCSLSSSYAPSPVSSLTTSSDMSEDLDHQEIQVALQAAKLAAHNKIRSRFHSSSDLIHRLFVCISGVADQLQTNYASDLRSILKTLFEVMATKTDQGDNEKPKKGPCLGSAVLEDCALCQETISSSELAAKAREGQFEDPPEWVPDEACNSCIACKAPFTVIRRKHHCRSCGKIFCSRCSSHSAPLPRYGQMKPVRVCTHCYMFHVTPFYSDRTGI.

Lys87 is covalently cross-linked (Glycyl lysine isopeptide (Lys-Gly) (interchain with G-Cter in ubiquitin)). Disordered stretches follow at residues 290-323, 336-360, 390-437, and 715-777; these read QDGE…GVEE, SVWK…EEPI, STLL…YHDD, and RSEC…DMSE. Polar residues predominate over residues 295–310; sequence PTSSTNDPSASTGPDS. Basic and acidic residues predominate over residues 336–346; it reads SVWKEEEEKQV. The segment covering 391–402 has biased composition (polar residues); it reads TLLSPPSQNQSP. The span at 411–423 shows a compositional bias: low complexity; sequence GSSLEGSSATSST. Over residues 715-729 the composition is skewed to basic and acidic residues; sequence RSECFGKQSKDDNRK. Low complexity-rich tracts occupy residues 732–745 and 756–769; these read SSSQ…VPSS and SLSS…VSSL. The segment at 899 to 959 adopts an FYVE-type zinc-finger fold; it reads DEACNSCIAC…VCTHCYMFHV (61 aa). Zn(2+)-binding residues include Cys905, Cys908, Cys921, Cys924, Cys929, Cys932, Cys951, and Cys954.

Belongs to the lst-2 family. Post-translationally, monoubiquitination at Lys-87 prevents binding to phosphatidylinositol 3-phosphate (PI3P) and localization to early endosome membranes.

The protein localises to the cytoplasm. It is found in the cytosol. Its subcellular location is the early endosome membrane. Functionally, negative regulator of epidermal growth factor receptor (EGFR) signaling. Acts by promoting EGFR degradation in endosomes when not monoubiquitinated. The polypeptide is Lateral signaling target protein 2 homolog (zfyve28) (Danio rerio (Zebrafish)).